Consider the following 492-residue polypeptide: Catalase (492 aa).

Catalysis depends on residues H65 and N138. Y348 contributes to the heme binding site.

The protein belongs to the catalase family. Homotetramer. Requires heme as cofactor.

The protein localises to the cytoplasm. Its subcellular location is the cytosol. It localises to the peroxisome matrix. The enzyme catalyses 2 H2O2 = O2 + 2 H2O. In terms of biological role, catalyzes the degradation of hydrogen peroxide (H(2)O(2)) generated by peroxisomal oxidases to water and oxygen, thereby protecting cells from the toxic effects of hydrogen peroxide. This is Catalase from Ipomoea batatas (Sweet potato).